Here is a 116-residue protein sequence, read N- to C-terminus: NADH-ubiquinone oxidoreductase chain 3 (116 aa).

Helical transmembrane passes span Leu-4–Trp-24, Phe-56–Leu-76, and Thr-88–Ile-108.

This sequence belongs to the complex I subunit 3 family. Core subunit of respiratory chain NADH dehydrogenase (Complex I) which is composed of 45 different subunits. Interacts with TMEM186. Interacts with TMEM242.

The protein resides in the mitochondrion inner membrane. It catalyses the reaction a ubiquinone + NADH + 5 H(+)(in) = a ubiquinol + NAD(+) + 4 H(+)(out). Functionally, core subunit of the mitochondrial membrane respiratory chain NADH dehydrogenase (Complex I) which catalyzes electron transfer from NADH through the respiratory chain, using ubiquinone as an electron acceptor. Essential for the catalytic activity of complex I. In Didelphis virginiana (North American opossum), this protein is NADH-ubiquinone oxidoreductase chain 3.